Here is a 47-residue protein sequence, read N- to C-terminus: Gene 60 protein (47 aa).

The chain is Gene 60 protein (60) from Mycobacterium phage L5 (Mycobacteriophage L5).